The following is a 235-amino-acid chain: Glutathione S-transferase L3 (235 aa).

The GST N-terminal domain occupies 27-108; that stretch reads GTTRLYTSYV…YLDNTFEGPS (82 aa). Glutathione-binding positions include 37–38, 65–66, 79–80, and 92–93; these read CP, NR, KV, and ES. In terms of domain architecture, GST C-terminal spans 86–230; it reads NGKIIGESLD…MDPKEIVEVF (145 aa).

It belongs to the GST superfamily. Lambda family.

It is found in the cytoplasm. The protein localises to the cytosol. The enzyme catalyses RX + glutathione = an S-substituted glutathione + a halide anion + H(+). Its function is as follows. Catalyzes the glutathione-dependent reduction of S-glutathionylquercetin to quercetin. The protein is Glutathione S-transferase L3 (GSTL3) of Arabidopsis thaliana (Mouse-ear cress).